Consider the following 328-residue polypeptide: DNA-directed RNA polymerase subunit alpha (328 aa).

The tract at residues 1 to 232 (MSTQGFLKPR…DQISVFAALE (232 aa)) is alpha N-terminal domain (alpha-NTD). Residues 248–328 (IDPVLLRPVD…NWPPLGLERP (81 aa)) are alpha C-terminal domain (alpha-CTD).

The protein belongs to the RNA polymerase alpha chain family. As to quaternary structure, homodimer. The RNAP catalytic core consists of 2 alpha, 1 beta, 1 beta' and 1 omega subunit. When a sigma factor is associated with the core the holoenzyme is formed, which can initiate transcription.

The catalysed reaction is RNA(n) + a ribonucleoside 5'-triphosphate = RNA(n+1) + diphosphate. In terms of biological role, DNA-dependent RNA polymerase catalyzes the transcription of DNA into RNA using the four ribonucleoside triphosphates as substrates. This Bordetella avium (strain 197N) protein is DNA-directed RNA polymerase subunit alpha.